Here is a 742-residue protein sequence, read N- to C-terminus: G2/M phase-specific E3 ubiquitin-protein ligase (742 aa).

The C2HC pre-PHD-type zinc-finger motif lies at 10 to 50; the sequence is SPPCVLCGWTDNCPEKYGEKRTYVEYNLTLHNYCLLMSSGI. The PHD-type 1 zinc-finger motif lies at 78–127; it reads LMCNICRKKGASIGCVAPKCKRSYHFPCGLQKECVFQFMEDFRSYCWEHK. Residues 142–192 form a PHD-type 2; degenerate zinc finger; sequence QCTICLDLVEHLPLYSVLRSPCCKNTWFHRECLQYQALSAGIFFFRCAVCN. The PHD-type 3 zinc finger occupies 236–285; it reads RCLCKNGRDYNKPDSKWEIKRCQSCGSRGTHLACSSIKSWEQNWECVECR. The 326-residue stretch at 417–742 folds into the HECT domain; sequence KGFRQRNFRP…IRSTLRGERE (326 aa).

It is found in the nucleus. The protein localises to the nucleolus. Its subcellular location is the cytoplasm. It catalyses the reaction S-ubiquitinyl-[E2 ubiquitin-conjugating enzyme]-L-cysteine + [acceptor protein]-L-lysine = [E2 ubiquitin-conjugating enzyme]-L-cysteine + N(6)-ubiquitinyl-[acceptor protein]-L-lysine.. It participates in protein modification; protein ubiquitination. In terms of biological role, E3 ubiquitin-protein ligase which accepts ubiquitin from an E2 ubiquitin-conjugating enzyme in the form of a thioester and then directly transfers the ubiquitin to targeted substrates. Essential in early embryonic development to prevent apoptotic death. This Gallus gallus (Chicken) protein is G2/M phase-specific E3 ubiquitin-protein ligase (G2E3).